A 1318-amino-acid polypeptide reads, in one-letter code: DNA-directed RNA polymerase subunit beta' (1318 aa).

C60, C62, C75, and C78 together coordinate Zn(2+). The Mg(2+) site is built by D535, D537, and D539. Residues C890, C967, C974, and C977 each contribute to the Zn(2+) site.

It belongs to the RNA polymerase beta' chain family. The RNAP catalytic core consists of 2 alpha, 1 beta, 1 beta' and 1 omega subunit. When a sigma factor is associated with the core the holoenzyme is formed, which can initiate transcription. Mg(2+) is required as a cofactor. Requires Zn(2+) as cofactor.

The enzyme catalyses RNA(n) + a ribonucleoside 5'-triphosphate = RNA(n+1) + diphosphate. In terms of biological role, DNA-dependent RNA polymerase catalyzes the transcription of DNA into RNA using the four ribonucleoside triphosphates as substrates. This is DNA-directed RNA polymerase subunit beta' from Rhodococcus erythropolis (strain PR4 / NBRC 100887).